We begin with the raw amino-acid sequence, 240 residues long: Biosynthetic peptidoglycan transglycosylase (240 aa).

A helical transmembrane segment spans residues 12–31 (ALMWFMVGSVLLVLLLRFVP).

The protein belongs to the glycosyltransferase 51 family.

It localises to the cell inner membrane. The enzyme catalyses [GlcNAc-(1-&gt;4)-Mur2Ac(oyl-L-Ala-gamma-D-Glu-L-Lys-D-Ala-D-Ala)](n)-di-trans,octa-cis-undecaprenyl diphosphate + beta-D-GlcNAc-(1-&gt;4)-Mur2Ac(oyl-L-Ala-gamma-D-Glu-L-Lys-D-Ala-D-Ala)-di-trans,octa-cis-undecaprenyl diphosphate = [GlcNAc-(1-&gt;4)-Mur2Ac(oyl-L-Ala-gamma-D-Glu-L-Lys-D-Ala-D-Ala)](n+1)-di-trans,octa-cis-undecaprenyl diphosphate + di-trans,octa-cis-undecaprenyl diphosphate + H(+). It participates in cell wall biogenesis; peptidoglycan biosynthesis. In terms of biological role, peptidoglycan polymerase that catalyzes glycan chain elongation from lipid-linked precursors. The polypeptide is Biosynthetic peptidoglycan transglycosylase (Pseudomonas fluorescens (strain ATCC BAA-477 / NRRL B-23932 / Pf-5)).